The sequence spans 81 residues: MSHSVKIYDTCIGCTQCVRACPTDVLEMIPWDGCKAKQIASAPRTEDCVGCKRCESACPTDFLSVRVYLWHETTRSMGLSY.

2 4Fe-4S ferredoxin-type domains span residues 2-31 (SHSV…MIPW) and 39-68 (IASA…VRVY). [4Fe-4S] cluster is bound by residues cysteine 11, cysteine 14, cysteine 17, cysteine 21, cysteine 48, cysteine 51, cysteine 54, and cysteine 58.

The eukaryotic PSI reaction center is composed of at least 11 subunits. It depends on [4Fe-4S] cluster as a cofactor.

The protein localises to the plastid. Its subcellular location is the chloroplast thylakoid membrane. The enzyme catalyses reduced [plastocyanin] + hnu + oxidized [2Fe-2S]-[ferredoxin] = oxidized [plastocyanin] + reduced [2Fe-2S]-[ferredoxin]. In terms of biological role, apoprotein for the two 4Fe-4S centers FA and FB of photosystem I (PSI); essential for photochemical activity. FB is the terminal electron acceptor of PSI, donating electrons to ferredoxin. The C-terminus interacts with PsaA/B/D and helps assemble the protein into the PSI complex. Required for binding of PsaD and PsaE to PSI. PSI is a plastocyanin-ferredoxin oxidoreductase, converting photonic excitation into a charge separation, which transfers an electron from the donor P700 chlorophyll pair to the spectroscopically characterized acceptors A0, A1, FX, FA and FB in turn. The sequence is that of Photosystem I iron-sulfur center from Phalaenopsis aphrodite subsp. formosana (Moth orchid).